The following is a 266-amino-acid chain: Glucosamine-6-phosphate deaminase (266 aa).

The Proton acceptor; for enolization step role is filled by Asp72. Asp141 functions as the For ring-opening step in the catalytic mechanism. His143 serves as the catalytic Proton acceptor; for ring-opening step. Glu148 acts as the For ring-opening step in catalysis.

Belongs to the glucosamine/galactosamine-6-phosphate isomerase family. NagB subfamily. As to quaternary structure, homohexamer.

The enzyme catalyses alpha-D-glucosamine 6-phosphate + H2O = beta-D-fructose 6-phosphate + NH4(+). Its pathway is amino-sugar metabolism; N-acetylneuraminate degradation; D-fructose 6-phosphate from N-acetylneuraminate: step 5/5. Allosterically activated by N-acetylglucosamine 6-phosphate (GlcNAc6P). In terms of biological role, catalyzes the reversible isomerization-deamination of glucosamine 6-phosphate (GlcN6P) to form fructose 6-phosphate (Fru6P) and ammonium ion. This chain is Glucosamine-6-phosphate deaminase, found in Erwinia tasmaniensis (strain DSM 17950 / CFBP 7177 / CIP 109463 / NCPPB 4357 / Et1/99).